The sequence spans 349 residues: GTPase Obg (349 aa).

The Obg domain maps to 1-159 (MKFLDEAKVY…RWIWLRLKLI (159 aa)). The 168-residue stretch at 160–327 (ADAGLVGLPN…ALRALVAVIG (168 aa)) folds into the OBG-type G domain. Residues 166–173 (GLPNAGKS), 191–195 (FTTLH), 212–215 (DIPG), 279–282 (NKID), and 308–310 (SGV) each bind GTP. 2 residues coordinate Mg(2+): serine 173 and threonine 193.

This sequence belongs to the TRAFAC class OBG-HflX-like GTPase superfamily. OBG GTPase family. In terms of assembly, monomer. Requires Mg(2+) as cofactor.

It localises to the cytoplasm. An essential GTPase which binds GTP, GDP and possibly (p)ppGpp with moderate affinity, with high nucleotide exchange rates and a fairly low GTP hydrolysis rate. Plays a role in control of the cell cycle, stress response, ribosome biogenesis and in those bacteria that undergo differentiation, in morphogenesis control. This Rhodopseudomonas palustris (strain BisA53) protein is GTPase Obg.